Reading from the N-terminus, the 843-residue chain is INO80 complex subunit D-B (843 aa).

A compositionally biased stretch (basic and acidic residues) spans 159–175 (TLNHKQKQQDHSVDTNH). 5 disordered regions span residues 159 to 216 (TLNH…PTVR), 221 to 240 (FKTSSSLQDTHQGSKDSTDN), 503 to 550 (YHHH…LPQG), 695 to 726 (SLLHPSEDAFPPSPPSPQPPLTPPSSVGHLTD), and 791 to 843 (LSTP…TAAP). Composition is skewed to polar residues over residues 176 to 187 (LRTSSLPSTLSH), 197 to 216 (RATQTPINPSSPRAATPTVR), and 221 to 231 (FKTSSSLQDTH). Over residues 503 to 540 (YHHHQQIQRHRPLKKAKPPALSKKHKKKGKRGTQRRPQ) the composition is skewed to basic residues. Over residues 705-717 (PPSPPSPQPPLTP) the composition is skewed to pro residues. Low complexity predominate over residues 796-821 (QPSSALSALPQSSQTRSTTTSPTSQT).

It belongs to the INO80D family. As to quaternary structure, component of the chromatin-remodeling INO80 complex.

It is found in the nucleus. Functionally, putative regulatory component of the chromatin remodeling INO80 complex which is involved in transcriptional regulation, DNA replication and probably DNA repair. The protein is INO80 complex subunit D-B (ino80db) of Danio rerio (Zebrafish).